Here is a 212-residue protein sequence, read N- to C-terminus: Methylthioribulose-1-phosphate dehydratase (212 aa).

His97 and His99 together coordinate Zn(2+).

It belongs to the aldolase class II family. MtnB subfamily. Homotetramer. The cofactor is Zn(2+).

It carries out the reaction 5-(methylsulfanyl)-D-ribulose 1-phosphate = 5-methylsulfanyl-2,3-dioxopentyl phosphate + H2O. It participates in amino-acid biosynthesis; L-methionine biosynthesis via salvage pathway; L-methionine from S-methyl-5-thio-alpha-D-ribose 1-phosphate: step 2/6. In terms of biological role, catalyzes the dehydration of methylthioribulose-1-phosphate (MTRu-1-P) into 2,3-diketo-5-methylthiopentyl-1-phosphate (DK-MTP-1-P). The polypeptide is Methylthioribulose-1-phosphate dehydratase (Bacillus cytotoxicus (strain DSM 22905 / CIP 110041 / 391-98 / NVH 391-98)).